The following is a 375-amino-acid chain: Erythronate-4-phosphate dehydrogenase (375 aa).

Residues Ser45 and Thr66 each coordinate substrate. NAD(+) is bound by residues Asp146, Thr175, Ala206–Arg208, and Asp232. The active site involves Arg208. Residue Glu237 is part of the active site. Catalysis depends on His254, which acts as the Proton donor. Gly257 is a binding site for NAD(+). Residue Tyr258 participates in substrate binding.

This sequence belongs to the D-isomer specific 2-hydroxyacid dehydrogenase family. PdxB subfamily. As to quaternary structure, homodimer.

The protein resides in the cytoplasm. The catalysed reaction is 4-phospho-D-erythronate + NAD(+) = (R)-3-hydroxy-2-oxo-4-phosphooxybutanoate + NADH + H(+). The protein operates within cofactor biosynthesis; pyridoxine 5'-phosphate biosynthesis; pyridoxine 5'-phosphate from D-erythrose 4-phosphate: step 2/5. In terms of biological role, catalyzes the oxidation of erythronate-4-phosphate to 3-hydroxy-2-oxo-4-phosphonooxybutanoate. The sequence is that of Erythronate-4-phosphate dehydrogenase from Photorhabdus laumondii subsp. laumondii (strain DSM 15139 / CIP 105565 / TT01) (Photorhabdus luminescens subsp. laumondii).